The sequence spans 694 residues: GRB2-associated-binding protein 1 (694 aa).

S2 is modified (N-acetylserine). Residues 5–116 (EVVCSGWLRK…WVRCICDICG (112 aa)) form the PH domain. 2 disordered regions span residues 122–164 (EDPV…PYQL) and 194–231 (PEPT…SKHG). Positions 145 to 157 (APPSTQADSSSAT) are enriched in polar residues. Residues 194 to 203 (PEPTRTHADS) are compositionally biased toward basic and acidic residues. Polar residues predominate over residues 204 to 231 (AKSTSSETDCNDNVPSHKNPASSQSKHG). Residues S251, S253, S266, and S304 each carry the phosphoserine modification. Residues 323–386 (FPEGTLGQTS…TAGMSPSRSN (64 aa)) are disordered. The span at 362–386 (IPRTASDTDSSYCIPTAGMSPSRSN) shows a compositional bias: polar residues. Phosphothreonine is present on T387. S402 and S454 each carry phosphoserine. Disordered regions lie at residues 493 to 532 (AHMG…VKPA) and 544 to 656 (ELQA…ADER). Position 547 is a phosphoserine (A547). Residues 594–611 (PNLSSEDPNLFGSNSLDG) are compositionally biased toward polar residues. Position 627 is a phosphotyrosine (Y627). Residue T638 is modified to Phosphothreonine. S651 is modified (phosphoserine). Y659 bears the Phosphotyrosine mark. Positions 671 to 694 (KSTREAWTDGRQSTESETPAKSVK) are disordered. Positions 672–684 (STREAWTDGRQST) are enriched in basic and acidic residues. The residue at position 683 (S683) is a Phosphoserine. A compositionally biased stretch (polar residues) spans 685 to 694 (ESETPAKSVK).

Belongs to the GAB family. In terms of assembly, identified in a complex containing FRS2, GRB2, GAB1, PIK3R1 and SOS1. Forms a tripartite complex containing GAB1, METTL13 and SPRY2. Within the complex interacts with METTL13. Interacts with GRB2 and with other SH2-containing proteins. Interacts with phosphorylated LAT2. Interacts with PTPRJ. Interacts (phosphorylated) with PTPN11. Interacts with HCK. Post-translationally, phosphorylated in response to FGFR1 activation. Phosphorylated on tyrosine residue(s) by the epidermal growth factor receptor (EGFR) and the insulin receptor (INSR). Tyrosine phosphorylation of GAB1 mediates interaction with several proteins that contain SH2 domains. Phosphorylated on tyrosine residues by HCK upon IL6 signaling.

Its function is as follows. Adapter protein that plays a role in intracellular signaling cascades triggered by activated receptor-type kinases. Plays a role in FGFR1 signaling. Probably involved in signaling by the epidermal growth factor receptor (EGFR) and the insulin receptor (INSR). Involved in the MET/HGF-signaling pathway. The chain is GRB2-associated-binding protein 1 (GAB1) from Homo sapiens (Human).